The chain runs to 376 residues: uncharacterized protein (376 aa).

Serine 59 bears the Phosphoserine mark. The region spanning 139-367 (VAIEITVQRQ…CLIEHHNAIF (229 aa)) is the Rho-GAP domain. Residues 307–338 (RPSRSPKKSNDFETATPWDLLSDEGEGPDASS) are disordered.

This is an uncharacterized protein from Arabidopsis thaliana (Mouse-ear cress).